The primary structure comprises 55 residues: Metallothionein-3 (55 aa).

The protein belongs to the metallothionein superfamily. Type 11 family.

The sequence is that of Metallothionein-3 (MTP3) from Yarrowia lipolytica (strain CLIB 122 / E 150) (Yeast).